The following is a 458-amino-acid chain: Transmembrane protein 135 (458 aa).

A run of 6 helical transmembrane segments spans residues 68-88 (ILQSASFLTANGALFMAFFCI), 96-116 (FYLWSPGFGAALPASYVAILV), 149-169 (TLRNGEVLLFCITAAMYMFFF), 298-318 (FQLGAFLGSFVSIYKGTSCFL), 331-351 (IIAGFLAGVSMMFYKSTTISM), and 380-400 (IIYSISTAICFQAAVMEVQTL).

It belongs to the TMEM135 family.

Its subcellular location is the mitochondrion membrane. It is found in the peroxisome membrane. Functionally, involved in mitochondrial metabolism by regulating the balance between mitochondrial fusion and fission. May act as a regulator of mitochondrial fission that promotes DNM1L-dependent fission through activation of DNM1L. May be involved in peroxisome organization. The chain is Transmembrane protein 135 from Bos taurus (Bovine).